A 507-amino-acid chain; its full sequence is Histidine ammonia-lyase (507 aa).

Residues 141-143 constitute a cross-link (5-imidazolinone (Ala-Gly)); that stretch reads ASG. The residue at position 142 (serine 142) is a 2,3-didehydroalanine (Ser).

The protein belongs to the PAL/histidase family. Post-translationally, contains an active site 4-methylidene-imidazol-5-one (MIO), which is formed autocatalytically by cyclization and dehydration of residues Ala-Ser-Gly.

It localises to the cytoplasm. The enzyme catalyses L-histidine = trans-urocanate + NH4(+). The protein operates within amino-acid degradation; L-histidine degradation into L-glutamate; N-formimidoyl-L-glutamate from L-histidine: step 1/3. The protein is Histidine ammonia-lyase of Natranaerobius thermophilus (strain ATCC BAA-1301 / DSM 18059 / JW/NM-WN-LF).